The chain runs to 168 residues: MPRSRINGNFIDKTFSIVANILLRIIPTTSGEKEAFTYYRDGMSAQSEGNYAEALQNYYEAMRLEIDPYDRSYILYNIGLIHTSNGEHTKALEYYFRALERNPFLPQAFNNMAVICHYRGEQAIRQGDSEIAEAWFDQAAEYWKQAMALTPGNYIEAHNWLKITRRFE.

TPR repeat units lie at residues 35–68 (AFTY…EIDP), 72–105 (SYIL…NPFL), and 120–153 (GEQA…TPGN).

Belongs to the Ycf3 family.

Its subcellular location is the plastid. The protein resides in the chloroplast thylakoid membrane. Functionally, essential for the assembly of the photosystem I (PSI) complex. May act as a chaperone-like factor to guide the assembly of the PSI subunits. The sequence is that of Photosystem I assembly protein Ycf3 from Panax ginseng (Korean ginseng).